Here is a 210-residue protein sequence, read N- to C-terminus: Na(+)-translocating NADH-quinone reductase subunit D (210 aa).

6 consecutive transmembrane segments (helical) span residues 14-34, 42-62, 72-92, 96-116, 131-151, and 178-198; these read PIIN…ALAV, LVMS…ISLI, IIVQ…VLQA, EIAK…IVMG, FMDG…VGFF, and NGLL…IWVI.

This sequence belongs to the NqrDE/RnfAE family. Composed of six subunits; NqrA, NqrB, NqrC, NqrD, NqrE and NqrF.

The protein resides in the cell inner membrane. It catalyses the reaction a ubiquinone + n Na(+)(in) + NADH + H(+) = a ubiquinol + n Na(+)(out) + NAD(+). In terms of biological role, NQR complex catalyzes the reduction of ubiquinone-1 to ubiquinol by two successive reactions, coupled with the transport of Na(+) ions from the cytoplasm to the periplasm. NqrA to NqrE are probably involved in the second step, the conversion of ubisemiquinone to ubiquinol. The protein is Na(+)-translocating NADH-quinone reductase subunit D of Shewanella denitrificans (strain OS217 / ATCC BAA-1090 / DSM 15013).